Reading from the N-terminus, the 132-residue chain is ATP synthase epsilon chain (132 aa).

The protein belongs to the ATPase epsilon chain family. As to quaternary structure, F-type ATPases have 2 components, CF(1) - the catalytic core - and CF(0) - the membrane proton channel. CF(1) has five subunits: alpha(3), beta(3), gamma(1), delta(1), epsilon(1). CF(0) has three main subunits: a, b and c.

It localises to the cell membrane. Functionally, produces ATP from ADP in the presence of a proton gradient across the membrane. This is ATP synthase epsilon chain from Clostridium kluyveri (strain NBRC 12016).